Reading from the N-terminus, the 94-residue chain is Nucleoid-associated protein MYPE8070 (94 aa).

It belongs to the YbaB/EbfC family. In terms of assembly, homodimer.

The protein resides in the cytoplasm. It is found in the nucleoid. Its function is as follows. Binds to DNA and alters its conformation. May be involved in regulation of gene expression, nucleoid organization and DNA protection. The protein is Nucleoid-associated protein MYPE8070 of Malacoplasma penetrans (strain HF-2) (Mycoplasma penetrans).